The chain runs to 829 residues: Conserved oligomeric Golgi complex subunit 5 (829 aa).

Ser166 bears the Phosphoserine mark.

The protein belongs to the COG5 family. Component of the conserved oligomeric Golgi complex which is composed of eight different subunits and is required for normal Golgi morphology and localization.

The protein resides in the cytoplasm. It is found in the cytosol. It localises to the golgi apparatus membrane. Required for normal Golgi function. This chain is Conserved oligomeric Golgi complex subunit 5 (Cog5), found in Mus musculus (Mouse).